Reading from the N-terminus, the 443-residue chain is Transcription factor E2F2 (443 aa).

Residues 1 to 22 are disordered; that stretch reads MLRAPRTLAPATAQPTKSLPAL. Residues 67-107 form a cyclin A/CDK2 binding region; that stretch reads ATPHGPEGQIVRCAPAGRLPAKRKLDLEGIGRPTVPEFRTP. Residues 109–198 mediate DNA binding; it reads GKCIRVDGLP…KNNIQWVGRE (90 aa). The interval 157 to 178 is leucine-zipper; the sequence is LNWAAEVLDVQKRRIYDITNVL. Residues 162–198 carry the DEF box motif; the sequence is EVLDVQKRRIYDITNVLEGIQLIRKKSKNNIQWVGRE. The interval 199–291 is dimerization; sequence LFEDPTRPSR…PDRAEENLQI (93 aa). Residues 306-341 form a disordered region; the sequence is PEEGQEPDSPAKEALPSTSALSPIPDCAQPGCSTDS. The segment at 361-443 is transactivation; it reads PPPPLPPAPS…SYDLGDLLIN (83 aa). The segment at 416-433 is retinoblastoma protein binding; sequence DEYLWGMDEGEGISDLFD.

It belongs to the E2F/DP family. In terms of assembly, component of the DRTF1/E2F transcription factor complex. Forms heterodimers with DP family members. The E2F2 complex binds specifically hypophosphorylated retinoblastoma protein RB1. During the cell cycle, RB1 becomes phosphorylated in mid-to-late G1 phase, detaches from the DRTF1/E2F complex, rendering E2F transcriptionally active. Viral oncoproteins, notably E1A, T-antigen and HPV E7, are capable of sequestering RB protein, thus releasing the active complex. Binds EAPP. Post-translationally, phosphorylated by CDK2 and cyclin A-CDK2 in the S-phase.

It is found in the nucleus. Its function is as follows. Transcription activator that binds DNA cooperatively with DP proteins through the E2 recognition site, 5'-TTTC[CG]CGC-3' found in the promoter region of a number of genes whose products are involved in cell cycle regulation or in DNA replication. The DRTF1/E2F complex functions in the control of cell-cycle progression from g1 to s phase. E2F2 binds specifically to RB1 in a cell-cycle dependent manner. The chain is Transcription factor E2F2 (E2f2) from Mus musculus (Mouse).